We begin with the raw amino-acid sequence, 248 residues long: tRNA (guanine-N(1)-)-methyltransferase (248 aa).

S-adenosyl-L-methionine-binding positions include Gly-113 and 133–138 (IGDFVL).

The protein belongs to the RNA methyltransferase TrmD family. In terms of assembly, homodimer.

The protein localises to the cytoplasm. It carries out the reaction guanosine(37) in tRNA + S-adenosyl-L-methionine = N(1)-methylguanosine(37) in tRNA + S-adenosyl-L-homocysteine + H(+). Specifically methylates guanosine-37 in various tRNAs. In Dehalococcoides mccartyi (strain CBDB1), this protein is tRNA (guanine-N(1)-)-methyltransferase.